A 239-amino-acid chain; its full sequence is MRPSGRKTDQMRKVSFERNFSKHAEGSCLVKFGDTHVLCTASLEDKTPPWLRNTGKGWVTAEYGMLPRATGERMKREAAAGKQGGRTQEIQRLIGRSLRAVVDLQALGERQITLDCDVIQADGGTRTASITGGWIALYDCLKWMESRNMIKVDRVLKDHVAAISCGVFASQAVIDLDYLEDSSAETDANFVMTGAGGIVEIQGTAEGTPFTEEEFTSLMGLAKNGIGELVALQKQAIAG.

Phosphate-binding positions include Arg86 and 124–126 (GTR).

This sequence belongs to the RNase PH family. In terms of assembly, homohexameric ring arranged as a trimer of dimers.

It catalyses the reaction tRNA(n+1) + phosphate = tRNA(n) + a ribonucleoside 5'-diphosphate. Its function is as follows. Phosphorolytic 3'-5' exoribonuclease that plays an important role in tRNA 3'-end maturation. Removes nucleotide residues following the 3'-CCA terminus of tRNAs; can also add nucleotides to the ends of RNA molecules by using nucleoside diphosphates as substrates, but this may not be physiologically important. Probably plays a role in initiation of 16S rRNA degradation (leading to ribosome degradation) during starvation. The protein is Ribonuclease PH of Rhizobium etli (strain CIAT 652).